Here is a 644-residue protein sequence, read N- to C-terminus: 1,4-alpha-glucan branching enzyme GlgB (644 aa).

The active-site Nucleophile is Asp-309. Glu-362 (proton donor) is an active-site residue.

This sequence belongs to the glycosyl hydrolase 13 family. GlgB subfamily. Monomer.

The enzyme catalyses Transfers a segment of a (1-&gt;4)-alpha-D-glucan chain to a primary hydroxy group in a similar glucan chain.. Its pathway is glycan biosynthesis; glycogen biosynthesis. Catalyzes the formation of the alpha-1,6-glucosidic linkages in glycogen by scission of a 1,4-alpha-linked oligosaccharide from growing alpha-1,4-glucan chains and the subsequent attachment of the oligosaccharide to the alpha-1,6 position. The chain is 1,4-alpha-glucan branching enzyme GlgB from Cutibacterium acnes (strain DSM 16379 / KPA171202) (Propionibacterium acnes).